The following is a 445-amino-acid chain: Xylose isomerase (445 aa).

Active-site residues include His109 and Asp112. Mg(2+) is bound by residues Glu240, Glu276, His279, Asp304, Asp315, Asp317, and Asp347.

This sequence belongs to the xylose isomerase family. Homotetramer. Mg(2+) is required as a cofactor.

Its subcellular location is the cytoplasm. The enzyme catalyses alpha-D-xylose = alpha-D-xylulofuranose. The protein is Xylose isomerase of Xanthomonas oryzae pv. oryzae (strain MAFF 311018).